The following is a 437-amino-acid chain: Double-stranded RNA-binding protein 3 (437 aa).

The segment at 1–22 (MKKKSAPTPLPPETANTSPAPI) is disordered. DRBM domains are found at residues 35–104 (VFKS…EIVK) and 120–187 (LCKN…AIQG). 2 stretches are compositionally biased toward basic and acidic residues: residues 288–310 (AKRVEDEPPRDIEMVQPDKENQH) and 320–330 (DEARVEQEPSR). The tract at residues 288-331 (AKRVEDEPPRDIEMVQPDKENQHSDAALVQPDDEARVEQEPSRD) is disordered.

Binds double-stranded RNA. The chain is Double-stranded RNA-binding protein 3 (DRB3) from Oryza sativa subsp. japonica (Rice).